Reading from the N-terminus, the 520-residue chain is Ribonuclease Y (520 aa).

Residues 3 to 23 form a helical membrane-spanning segment; it reads IVIVVISILLALIVGIVVGYL. Residues 81 to 118 show a composition bias toward basic and acidic residues; sequence RMEAQKQENRLMQKEENLDRKSETLDKRESSLESKEQS. The interval 81-125 is disordered; the sequence is RMEAQKQENRLMQKEENLDRKSETLDKRESSLESKEQSLTEQQQQ. Residues 210 to 273 form the KH domain; the sequence is TVSVVNLPND…EIARMALEKL (64 aa). The HD domain maps to 336–429; sequence GLKHSAEVAY…VAAADALSAA (94 aa).

This sequence belongs to the RNase Y family.

Its subcellular location is the cell membrane. Its function is as follows. Endoribonuclease that initiates mRNA decay. The chain is Ribonuclease Y from Oceanobacillus iheyensis (strain DSM 14371 / CIP 107618 / JCM 11309 / KCTC 3954 / HTE831).